The chain runs to 345 residues: Uroporphyrinogen decarboxylase (345 aa).

Substrate contacts are provided by residues 27 to 31, Phe46, Asp76, Tyr152, Ser207, and His320; that span reads RQAGR.

This sequence belongs to the uroporphyrinogen decarboxylase family. Homodimer.

Its subcellular location is the cytoplasm. It catalyses the reaction uroporphyrinogen III + 4 H(+) = coproporphyrinogen III + 4 CO2. It participates in porphyrin-containing compound metabolism; protoporphyrin-IX biosynthesis; coproporphyrinogen-III from 5-aminolevulinate: step 4/4. In terms of biological role, catalyzes the decarboxylation of four acetate groups of uroporphyrinogen-III to yield coproporphyrinogen-III. This is Uroporphyrinogen decarboxylase from Geobacillus thermodenitrificans (strain NG80-2).